Reading from the N-terminus, the 450-residue chain is Citrate/malate-proton symporter (450 aa).

Over M1–K32 the chain is Cytoplasmic. Residues V33 to M53 form a helical membrane-spanning segment. Residues H54–S64 lie on the Extracellular side of the membrane. A helical membrane pass occupies residues I65 to V85. The Cytoplasmic portion of the chain corresponds to R86–S87. Residues I88–L108 form a helical membrane-spanning segment. Residues P109–E118 lie on the Extracellular side of the membrane. Residues F119–L139 form a helical membrane-spanning segment. Residues G140 to K152 lie on the Cytoplasmic side of the membrane. The chain crosses the membrane as a helical span at residues I153 to T173. Residues L174 to A217 are Extracellular-facing. The chain crosses the membrane as a helical span at residues F218–L238. Residues L239–Q273 are Cytoplasmic-facing. A disordered region spans residues W249–S268. The helical transmembrane segment at M274 to G294 threads the bilayer. Position 295 (M295) is a topological domain, extracellular. The chain crosses the membrane as a helical span at residues L296–I316. Residues K317–R335 lie on the Cytoplasmic side of the membrane. Residues F336–W356 traverse the membrane as a helical segment. The Extracellular portion of the chain corresponds to D357–N364. A helical transmembrane segment spans residues L365–T385. Topologically, residues G386–Q428 are cytoplasmic. A helical membrane pass occupies residues V429–L446. Over H447 to Y450 the chain is Extracellular.

It belongs to the 2-hydroxycarboxylate transporter (2-HCT) (TC 2.A.24) family.

Its subcellular location is the cell membrane. It carries out the reaction citrate(in) + 3 H(+)(in) = citrate(out) + 3 H(+)(out). It catalyses the reaction (S)-malate(in) + 2 H(+)(in) = (S)-malate(out) + 2 H(+)(out). With respect to regulation, the uptake activity is inhibited by divalent metal ions such as Ca(2+), Mg(2+) and Ni(2+). Functionally, proton motive force-driven secondary transporter that catalyzes the uptake of both citrate and malate. Is an electroneutral proton-solute symporter: the number of protons transported is equal to the valence of the transported anions. Translocates the free citrate and malate anions. Citramalate binds to the transporter, but it is not translocated. Is strictly stereoselective, recognizing only the (S)-enantiomers of malate and citramalate. The protein is Citrate/malate-proton symporter of Bacillus subtilis (strain 168).